The following is a 459-amino-acid chain: Phosphoenolpyruvate carboxylase (459 aa).

Belongs to the PEPCase type 2 family. Homotetramer. Mg(2+) is required as a cofactor.

The enzyme catalyses oxaloacetate + phosphate = phosphoenolpyruvate + hydrogencarbonate. In terms of biological role, catalyzes the irreversible beta-carboxylation of phosphoenolpyruvate (PEP) to form oxaloacetate (OAA), a four-carbon dicarboxylic acid source for the tricarboxylic acid cycle. In Pyrobaculum calidifontis (strain DSM 21063 / JCM 11548 / VA1), this protein is Phosphoenolpyruvate carboxylase.